The sequence spans 295 residues: Aspartate carbamoyltransferase catalytic subunit (295 aa).

Carbamoyl phosphate is bound by residues R49 and T50. K77 provides a ligand contact to L-aspartate. Positions 99, 127, and 130 each coordinate carbamoyl phosphate. L-aspartate contacts are provided by R161 and R212. G251 and P252 together coordinate carbamoyl phosphate.

It belongs to the aspartate/ornithine carbamoyltransferase superfamily. ATCase family. In terms of assembly, heterododecamer (2C3:3R2) of six catalytic PyrB chains organized as two trimers (C3), and six regulatory PyrI chains organized as three dimers (R2).

The catalysed reaction is carbamoyl phosphate + L-aspartate = N-carbamoyl-L-aspartate + phosphate + H(+). It participates in pyrimidine metabolism; UMP biosynthesis via de novo pathway; (S)-dihydroorotate from bicarbonate: step 2/3. Catalyzes the condensation of carbamoyl phosphate and aspartate to form carbamoyl aspartate and inorganic phosphate, the committed step in the de novo pyrimidine nucleotide biosynthesis pathway. This is Aspartate carbamoyltransferase catalytic subunit from Campylobacter jejuni subsp. doylei (strain ATCC BAA-1458 / RM4099 / 269.97).